The chain runs to 180 residues: Inner membrane-spanning protein YciB (180 aa).

5 consecutive transmembrane segments (helical) span residues 25–45 (QNAT…CYII), 49–69 (VSKL…ITLI), 76–96 (IKIK…MSGI), 118–138 (ITLS…NEIV), and 150–170 (FKVF…LPLL).

This sequence belongs to the YciB family.

The protein resides in the cell inner membrane. Its function is as follows. Plays a role in cell envelope biogenesis, maintenance of cell envelope integrity and membrane homeostasis. The sequence is that of Inner membrane-spanning protein YciB from Rickettsia akari (strain Hartford).